Reading from the N-terminus, the 213-residue chain is Large ribosomal subunit protein uL3 (213 aa).

Belongs to the universal ribosomal protein uL3 family. In terms of assembly, part of the 50S ribosomal subunit. Forms a cluster with proteins L14 and L19.

One of the primary rRNA binding proteins, it binds directly near the 3'-end of the 23S rRNA, where it nucleates assembly of the 50S subunit. The chain is Large ribosomal subunit protein uL3 from Bifidobacterium adolescentis (strain ATCC 15703 / DSM 20083 / NCTC 11814 / E194a).